The following is a 223-amino-acid chain: MAAQEQKTLKIDVKTPAGKVDGAIELPAELFDVPANIALMHQVVTAQRAAARQGTHSTKTRGEVSGGGRKPYRQKGTGRARQGSTRAPQFTGGGVVHGPKPRDYSQRTPKKMIAAALRGALSDRARNGRIHAITELVEGQNPSTKSARAFLASLTERKQVLVVIGRSDEAGAKSVRNLPGVHILAPDQLNTYDVLRADDVVFSVEALNAYIAANTTTSEEVSA.

Positions 49 to 106 (AAARQGTHSTKTRGEVSGGGRKPYRQKGTGRARQGSTRAPQFTGGGVVHGPKPRDYSQ) are disordered.

Belongs to the universal ribosomal protein uL4 family. In terms of assembly, part of the 50S ribosomal subunit.

One of the primary rRNA binding proteins, this protein initially binds near the 5'-end of the 23S rRNA. It is important during the early stages of 50S assembly. It makes multiple contacts with different domains of the 23S rRNA in the assembled 50S subunit and ribosome. Its function is as follows. Forms part of the polypeptide exit tunnel. This Mycobacterium bovis (strain ATCC BAA-935 / AF2122/97) protein is Large ribosomal subunit protein uL4.